The chain runs to 166 residues: Large ribosomal subunit protein uL10 (166 aa).

Belongs to the universal ribosomal protein uL10 family. In terms of assembly, part of the ribosomal stalk of the 50S ribosomal subunit. The N-terminus interacts with L11 and the large rRNA to form the base of the stalk. The C-terminus forms an elongated spine to which L12 dimers bind in a sequential fashion forming a multimeric L10(L12)X complex.

Its function is as follows. Forms part of the ribosomal stalk, playing a central role in the interaction of the ribosome with GTP-bound translation factors. The polypeptide is Large ribosomal subunit protein uL10 (Phytoplasma australiense).